Reading from the N-terminus, the 259-residue chain is uncharacterized protein (259 aa).

Transmembrane regions (helical) follow at residues 55–75 (ILILVLFSGTFLLSSYFSYLI), 85–105 (FPSITISLSSLLPPLIIFFSS), and 127–147 (FFFAFAVFFAASIAFLDLCCG).

The protein resides in the membrane. This is an uncharacterized protein from Arabidopsis thaliana (Mouse-ear cress).